The primary structure comprises 279 residues: uncharacterized protein (279 aa).

To M.tuberculosis Rv2569c.

This is an uncharacterized protein from Mycobacterium leprae (strain TN).